Here is a 60-residue protein sequence, read N- to C-terminus: Large ribosomal subunit protein uL30 (60 aa).

This sequence belongs to the universal ribosomal protein uL30 family. Part of the 50S ribosomal subunit.

This is Large ribosomal subunit protein uL30 from Dehalococcoides mccartyi (strain CBDB1).